A 703-amino-acid chain; its full sequence is Polyribonucleotide nucleotidyltransferase (703 aa).

Residues Asp487 and Asp493 each contribute to the Mg(2+) site. The KH domain occupies 554–613 (PKMETIKIDPDKIRDVIGKGGATIRSICEDTGASIDIDDNGTVRIYAESKLAADEAIYRI). The S1 motif domain maps to 623 to 691 (GKLYRGKVER…ARGRIKLSMK (69 aa)).

This sequence belongs to the polyribonucleotide nucleotidyltransferase family. Component of the RNA degradosome, which is a multiprotein complex involved in RNA processing and mRNA degradation. Mg(2+) serves as cofactor.

It localises to the cytoplasm. It catalyses the reaction RNA(n+1) + phosphate = RNA(n) + a ribonucleoside 5'-diphosphate. Functionally, involved in mRNA degradation. Catalyzes the phosphorolysis of single-stranded polyribonucleotides processively in the 3'- to 5'-direction. This Hahella chejuensis (strain KCTC 2396) protein is Polyribonucleotide nucleotidyltransferase.